A 154-amino-acid chain; its full sequence is Ribosome maturation factor RimP (154 aa).

The protein belongs to the RimP family.

The protein localises to the cytoplasm. Functionally, required for maturation of 30S ribosomal subunits. The polypeptide is Ribosome maturation factor RimP (Clostridium perfringens (strain SM101 / Type A)).